A 489-amino-acid polypeptide reads, in one-letter code: Protein translocase subunit SecY (489 aa).

Residues 1 to 20 (MGWKDAAEPVLSRMPAVARP) are Cytoplasmic-facing. Residues 21-47 (EGHVPFRRKLGWTGGILVLYFFLTNVT) form a helical membrane-spanning segment. At 48-59 (LFGLDAATANDL) the chain is on the extracellular side. An intramembrane region (helical) is located at residues 60 to 67 (FGQFRSIL). The chain crosses the membrane as a discontinuously helical span at residues 60–88 (FGQFRSILAGQQGSVLQLGIGPIVTASIV). The stretch at 68 to 79 (AGQQGSVLQLGI) is an intramembrane region. The segment at residues 80–88 (GPIVTASIV) is an intramembrane region (helical). The Cytoplasmic segment spans residues 89–110 (LQLLGGADLLGLDTDNNPRDQV). Residues 111-135 (LYQGLQKLLVGVMICLTGLPMVFAG) form a helical membrane-spanning segment. The Extracellular segment spans residues 136–153 (NFLPADQAVATSLGIGTV). The helical transmembrane segment at 154 to 178 (GVKGLIFAQIAVGGVLILFMDEIVS) threads the bilayer. The Cytoplasmic portion of the chain corresponds to 179–184 (KWGVGS). A helical transmembrane segment spans residues 185–203 (GVGLFIIAGVSQQLVGGLF). The Extracellular portion of the chain corresponds to 204 to 244 (SWQGLGGTSGFFATWIGIITGAIELPASPTDLLSTVFLGQG). The helical transmembrane segment at 245 to 266 (QLLALITTLLIFGIVVYAESVR) threads the bilayer. Topologically, residues 267-291 (VEIPLSHARVKGARGRFPVKLIYAS) are cytoplasmic. The chain crosses the membrane as a helical span at residues 292–313 (VLPMILVRALQANIQFLGRFLN). The Extracellular segment spans residues 314–364 (SSWVGMPAWLGQYTSGQVTGGLLYYLAPIQSRSDWMWFLGLTSADPLDIAI). A helical transmembrane segment spans residues 365–384 (RVLIDLIFMIVGGAVFAIFW). Residues 385-427 (VETTGMGPKSTAQQIQNSGMQIPGFRRNPQVIERVMERYIPQV) are Cytoplasmic-facing. Residues 428-446 (TVIGGALVGLLAVMANMLG) traverse the membrane as a helical segment. Residues 447–450 (TIGA) are Extracellular-facing. The chain crosses the membrane as a helical span at residues 451–465 (VSGTGLLLTVSITYK). Topologically, residues 466–488 (LYEEIAEEQLMEMHPMMRNMFGS) are cytoplasmic.

This sequence belongs to the SecY/SEC61-alpha family. Component of the Sec protein translocase complex. Heterotrimer consisting of alpha (SecY), beta (SecG) and gamma (SecE) subunits. The heterotrimers can form oligomers, although 1 heterotrimer is thought to be able to translocate proteins. Interacts with the ribosome. May interact with SecDF, and other proteins may be involved.

It is found in the cell membrane. In terms of biological role, the central subunit of the protein translocation channel SecYEG. Consists of two halves formed by TMs 1-5 and 6-10. These two domains form a lateral gate at the front which open onto the bilayer between TMs 2 and 7, and are clamped together by SecE at the back. The channel is closed by both a pore ring composed of hydrophobic SecY resides and a short helix (helix 2A) on the extracellular side of the membrane which forms a plug. The plug probably moves laterally to allow the channel to open. The ring and the pore may move independently. The sequence is that of Protein translocase subunit SecY from Haloferax volcanii (strain ATCC 29605 / DSM 3757 / JCM 8879 / NBRC 14742 / NCIMB 2012 / VKM B-1768 / DS2) (Halobacterium volcanii).